A 261-amino-acid chain; its full sequence is Ribonuclease PH (261 aa).

Phosphate contacts are provided by residues Arg87 and 125 to 127 (GTR).

This sequence belongs to the RNase PH family. As to quaternary structure, homohexameric ring arranged as a trimer of dimers.

It catalyses the reaction tRNA(n+1) + phosphate = tRNA(n) + a ribonucleoside 5'-diphosphate. In terms of biological role, phosphorolytic 3'-5' exoribonuclease that plays an important role in tRNA 3'-end maturation. Removes nucleotide residues following the 3'-CCA terminus of tRNAs; can also add nucleotides to the ends of RNA molecules by using nucleoside diphosphates as substrates, but this may not be physiologically important. Probably plays a role in initiation of 16S rRNA degradation (leading to ribosome degradation) during starvation. The chain is Ribonuclease PH from Caldanaerobacter subterraneus subsp. tengcongensis (strain DSM 15242 / JCM 11007 / NBRC 100824 / MB4) (Thermoanaerobacter tengcongensis).